A 138-amino-acid polypeptide reads, in one-letter code: Microneme antigen L2 (138 aa).

PAN domains lie at 9–78 (CFAH…PRSC) and 82–138 (CSDA…SKRA). Cystine bridges form between Cys-9/Cys-78, Cys-34/Cys-56, Cys-38/Cys-44, Cys-82/Cys-86, Cys-107/Cys-127, and Cys-111/Cys-117. Residue Ser-18 participates in a carbohydrate binding. Positions 59, 66, and 71 each coordinate a carbohydrate.

In terms of assembly, homodimer or heterodimer. In terms of processing, contains six disulfide bonds.

The protein resides in the cytoplasmic vesicle. It localises to the secretory vesicle. The protein localises to the microneme. Functionally, galactose-binding lectin. Plays a role in adhesion to the host cell. Has a potential role in invasion of host cells. This is Microneme antigen L2 from Sarcocystis muris.